The following is an 84-amino-acid chain: Cell division topological specificity factor (84 aa).

This sequence belongs to the MinE family.

In terms of biological role, prevents the cell division inhibition by proteins MinC and MinD at internal division sites while permitting inhibition at polar sites. This ensures cell division at the proper site by restricting the formation of a division septum at the midpoint of the long axis of the cell. In Rhodopseudomonas palustris (strain BisA53), this protein is Cell division topological specificity factor.